The following is a 675-amino-acid chain: Methionine--tRNA ligase (675 aa).

A 'HIGH' region motif is present at residues 15–25; it reads PYANGSIHLGH. Zn(2+) contacts are provided by Cys146, Cys149, Cys159, and Cys162. The 'KMSKS' region signature appears at 332–336; that stretch reads KMSKS. Lys335 serves as a coordination point for ATP. The tRNA-binding domain occupies 574–675; that stretch reads DFAKLDLRIA…AGAKPGMRVK (102 aa).

The protein belongs to the class-I aminoacyl-tRNA synthetase family. MetG type 1 subfamily. As to quaternary structure, homodimer. The cofactor is Zn(2+).

It localises to the cytoplasm. The catalysed reaction is tRNA(Met) + L-methionine + ATP = L-methionyl-tRNA(Met) + AMP + diphosphate. Is required not only for elongation of protein synthesis but also for the initiation of all mRNA translation through initiator tRNA(fMet) aminoacylation. The polypeptide is Methionine--tRNA ligase (Tolumonas auensis (strain DSM 9187 / NBRC 110442 / TA 4)).